A 201-amino-acid polypeptide reads, in one-letter code: Lipopolysaccharide core heptose(II)-phosphate phosphatase (201 aa).

Residues 1–35 form the signal peptide; the sequence is MLAFTLRFIKNKRYLATLAGALVIIAGLTSQHAWS.

Belongs to the phosphoglycerate mutase family. Ais subfamily.

It is found in the periplasm. Its pathway is bacterial outer membrane biogenesis; lipopolysaccharide metabolism. Its function is as follows. Catalyzes the dephosphorylation of heptose(II) of the outer membrane lipopolysaccharide core. The chain is Lipopolysaccharide core heptose(II)-phosphate phosphatase from Salmonella newport (strain SL254).